The chain runs to 454 residues: Bifunctional protein GlmU (454 aa).

A pyrophosphorylase region spans residues 1-226; that stretch reads MSLEIVILAA…AMEVQGVNDR (226 aa). Residues 8 to 11, lysine 22, glutamine 73, 78 to 79, 99 to 101, glycine 136, glutamate 151, asparagine 166, and asparagine 224 contribute to the UDP-N-acetyl-alpha-D-glucosamine site; these read LAAG, GT, and YGD. A Mg(2+)-binding site is contributed by aspartate 101. Asparagine 224 contacts Mg(2+). The interval 227–247 is linker; it reads MQQAQLERHYQRLRAEELMRQ. Positions 248–454 are N-acetyltransferase; it reads GVTLLDPQRL…NWKRPEKIKK (207 aa). UDP-N-acetyl-alpha-D-glucosamine-binding residues include arginine 330 and lysine 348. Catalysis depends on histidine 360, which acts as the Proton acceptor. Positions 363 and 374 each coordinate UDP-N-acetyl-alpha-D-glucosamine. Residues alanine 377, 383 to 384, serine 402, alanine 420, and arginine 437 each bind acetyl-CoA; that span reads NY.

It in the N-terminal section; belongs to the N-acetylglucosamine-1-phosphate uridyltransferase family. In the C-terminal section; belongs to the transferase hexapeptide repeat family. Homotrimer. Mg(2+) serves as cofactor.

It is found in the cytoplasm. The catalysed reaction is alpha-D-glucosamine 1-phosphate + acetyl-CoA = N-acetyl-alpha-D-glucosamine 1-phosphate + CoA + H(+). The enzyme catalyses N-acetyl-alpha-D-glucosamine 1-phosphate + UTP + H(+) = UDP-N-acetyl-alpha-D-glucosamine + diphosphate. The protein operates within nucleotide-sugar biosynthesis; UDP-N-acetyl-alpha-D-glucosamine biosynthesis; N-acetyl-alpha-D-glucosamine 1-phosphate from alpha-D-glucosamine 6-phosphate (route II): step 2/2. Its pathway is nucleotide-sugar biosynthesis; UDP-N-acetyl-alpha-D-glucosamine biosynthesis; UDP-N-acetyl-alpha-D-glucosamine from N-acetyl-alpha-D-glucosamine 1-phosphate: step 1/1. It participates in bacterial outer membrane biogenesis; LPS lipid A biosynthesis. In terms of biological role, catalyzes the last two sequential reactions in the de novo biosynthetic pathway for UDP-N-acetylglucosamine (UDP-GlcNAc). The C-terminal domain catalyzes the transfer of acetyl group from acetyl coenzyme A to glucosamine-1-phosphate (GlcN-1-P) to produce N-acetylglucosamine-1-phosphate (GlcNAc-1-P), which is converted into UDP-GlcNAc by the transfer of uridine 5-monophosphate (from uridine 5-triphosphate), a reaction catalyzed by the N-terminal domain. The polypeptide is Bifunctional protein GlmU (Pseudomonas aeruginosa (strain ATCC 15692 / DSM 22644 / CIP 104116 / JCM 14847 / LMG 12228 / 1C / PRS 101 / PAO1)).